The primary structure comprises 370 residues: DNA replication and repair protein RecF (370 aa).

30–37 (GQNGMGKT) contacts ATP.

This sequence belongs to the RecF family.

The protein localises to the cytoplasm. In terms of biological role, the RecF protein is involved in DNA metabolism; it is required for DNA replication and normal SOS inducibility. RecF binds preferentially to single-stranded, linear DNA. It also seems to bind ATP. This is DNA replication and repair protein RecF from Bacteroides fragilis (strain ATCC 25285 / DSM 2151 / CCUG 4856 / JCM 11019 / LMG 10263 / NCTC 9343 / Onslow / VPI 2553 / EN-2).